We begin with the raw amino-acid sequence, 207 residues long: Guanylate kinase (207 aa).

Positions 3 to 181 (GLLFVVSAAS…ALHDLESVIT (179 aa)) constitute a Guanylate kinase-like domain. 10 to 17 (AASGTGKT) is a binding site for ATP.

It belongs to the guanylate kinase family.

The protein resides in the cytoplasm. It catalyses the reaction GMP + ATP = GDP + ADP. Essential for recycling GMP and indirectly, cGMP. The polypeptide is Guanylate kinase (Acinetobacter baylyi (strain ATCC 33305 / BD413 / ADP1)).